A 120-amino-acid polypeptide reads, in one-letter code: Large ribosomal subunit protein uL29 (120 aa).

Belongs to the universal ribosomal protein uL29 family. Component of the large ribosomal subunit. Mature ribosomes consist of a small (40S) and a large (60S) subunit. The 40S subunit contains about 32 different proteins and 1 molecule of RNA (18S). The 60S subunit contains 45 different proteins and 3 molecules of RNA (25S, 5.8S and 5S).

Its subcellular location is the cytoplasm. Its function is as follows. Component of the ribosome, a large ribonucleoprotein complex responsible for the synthesis of proteins in the cell. The small ribosomal subunit (SSU) binds messenger RNAs (mRNAs) and translates the encoded message by selecting cognate aminoacyl-transfer RNA (tRNA) molecules. The large subunit (LSU) contains the ribosomal catalytic site termed the peptidyl transferase center (PTC), which catalyzes the formation of peptide bonds, thereby polymerizing the amino acids delivered by tRNAs into a polypeptide chain. The nascent polypeptides leave the ribosome through a tunnel in the LSU and interact with protein factors that function in enzymatic processing, targeting, and the membrane insertion of nascent chains at the exit of the ribosomal tunnel. This is Large ribosomal subunit protein uL29 from Candida albicans (strain SC5314 / ATCC MYA-2876) (Yeast).